The following is a 207-amino-acid chain: Pyridoxine/pyridoxamine 5'-phosphate oxidase (207 aa).

Residues 53 to 58 (RMVLLK), 68 to 69 (YT), lysine 75, and glutamine 97 each bind FMN. Lysine 58 serves as a coordination point for substrate. Substrate-binding residues include tyrosine 115, arginine 119, and serine 123. FMN is bound by residues 132-133 (QS) and tryptophan 177. 183-185 (RLH) is a substrate binding site. An FMN-binding site is contributed by arginine 187.

This sequence belongs to the pyridoxamine 5'-phosphate oxidase family. Homodimer. FMN serves as cofactor.

It catalyses the reaction pyridoxamine 5'-phosphate + O2 + H2O = pyridoxal 5'-phosphate + H2O2 + NH4(+). The enzyme catalyses pyridoxine 5'-phosphate + O2 = pyridoxal 5'-phosphate + H2O2. It participates in cofactor metabolism; pyridoxal 5'-phosphate salvage; pyridoxal 5'-phosphate from pyridoxamine 5'-phosphate: step 1/1. Its pathway is cofactor metabolism; pyridoxal 5'-phosphate salvage; pyridoxal 5'-phosphate from pyridoxine 5'-phosphate: step 1/1. In terms of biological role, catalyzes the oxidation of either pyridoxine 5'-phosphate (PNP) or pyridoxamine 5'-phosphate (PMP) into pyridoxal 5'-phosphate (PLP). The protein is Pyridoxine/pyridoxamine 5'-phosphate oxidase of Bartonella quintana (strain Toulouse) (Rochalimaea quintana).